The following is a 1331-amino-acid chain: METSSNSSGSSSSPPSQHQQQQQQNSQLNLSSQSCFSNNSSSAADFNNYMESKLSEENNYYKNFNSNLDRGDSFKLEKESIKDTIKDNIKEDKICNDNNNSSSSSSSSSSGNNNNNIKDGRAPSPITTQQISPNKLILNTTKAITKPTPILNTQQTPTTTATTNTSTSTTNSTPSKFKKIKNSTINPTIEFISKPSLSVMFGFSPIYFVESIFIVLLIYILSNFVLKETSVYVISIFVIYFVIYFDNRYQIINKLSKSSINDSDSSSNNNNNNNNTTTTNNDSASTKGNNNNEISSPETYQKDVKSKINFYEHVNISSTNLNNVNTTSNTPITNPSNVNQPSNITTATTATTTSTNNNNNVNNSINNNNNNNNNNNNNNNNNNNNNNNNNNNNNNNNNNNNGNNNGNNNGNNNNILSKENSTNSLLNNLILNNTSVGKTHNRSSSGSDSIQPPPLPTGGSSHNIFYSAFPTHPYTDIDQSSTYRTRTFGSSSINNRKSLPPEYYNQYLNFLAHSNNNNNNNNSNTNNNNNNQSVSAPVSQLATPVYQTPGTNSVVGNLENDNENNNDSFSDINDNNSVVGNDFEQDDQILQNNGISTTTSTIVPTNDETKQELSQLENSNKVRSTVSKFIKLSTGVEEKLDWAIAQQCTLQPPRSSHSVTVYGSSLVLIGGEGITGENLVQFIDVERNLFISPKVTGGKVGPESIYNHDYCRIGNKFYLFGGYVAGKLSNKLYVLTIMDDSTVHWSSPRISGGCIPSPRYGHTFTRYGNRFLLFGGYDGEQCLNDLYILEPETMCWSTVTNIKGGQTPSERFGHTSTILGEKLIIFGGKGINNNNNNNNNNNNNNNNNNNNNNNNNNNNNKGLVELNDTHILLLNEIDSSFQWQVASFHQVSEIPSERSFHSATRVGRNIVMVGGKKDDSNGNPIALRDCWVLSYRMQWSKVSGVQFSPPRYNFGLIKNGSKLFILGGKGNNNNINNNSSSGGNNSSSSSGNSNTIITNTTNTTNNNNNNNNNNNNNNNNNNNNNNNNNNNNNNNNNNNNNNNNLSILDDIWFVNTVTLPISSSVTMINYSDIKIDKEIGKGHFSKVLKGNWKGKDVAVKKLNSNKDKAREEMIQEFKAEVELLGSLQHPNLVTCYGYSLNPMCIVMEFLPSGNLFELIHSKPSEQQQSIKLDSTLILAIAFDIARGMQHLHTRNIIHRDLKSSNLLMDKHFNIKIADLGIARETSFTQTMTTIGTVAWTAPEILRHESYNQKADVYSYAIVLYELLTGEEPYQGIPPMNAGILVASKGLRPELPDNCDPNWKKLVVWCWSEDPNKRPSFEEITNYLTKTF.

Composition is skewed to low complexity over residues 1–42 (METS…NSSS), 96–116 (NDNN…NNNN), and 153–175 (TQQT…STPS). Disordered regions lie at residues 1–43 (METS…SSSA), 92–132 (DKIC…QQIS), and 150–175 (ILNT…STPS). The next 2 membrane-spanning stretches (helical) occupy residues 201–221 (FGFS…IYIL) and 224–244 (FVLK…FVIY). Over residues 259 to 287 (SINDSDSSSNNNNNNNNTTTTNNDSASTK) the composition is skewed to low complexity. Disordered regions lie at residues 259-300 (SIND…PETY), 320-419 (NLNN…LSKE), 435-464 (SVGK…SHNI), and 512-581 (AHSN…VVGN). The segment covering 288-299 (GNNNNEISSPET) has biased composition (polar residues). The segment covering 436–450 (VGKTHNRSSSGSDSI) has biased composition (polar residues). Residues 514 to 531 (SNNNNNNNNSNTNNNNNN) are compositionally biased toward low complexity. Polar residues predominate over residues 532-555 (QSVSAPVSQLATPVYQTPGTNSVV). Residues 557–577 (NLENDNENNNDSFSDINDNNS) are compositionally biased toward low complexity. 6 Kelch repeats span residues 665–710 (SLVL…NHDY), 716–769 (KFYL…RYGN), 770–816 (RFLL…GHTS), 822–868 (KLII…ELND), 909–959 (NIVM…LIKN), and 962–1008 (KLFI…NNNN). The span at 834 to 860 (NNNNNNNNNNNNNNNNNNNNNNNNNNN) shows a compositional bias: low complexity. The segment at 834–862 (NNNNNNNNNNNNNNNNNNNNNNNNNNNKG) is disordered. The interval 976 to 1042 (NNNSSSGGNN…NNNNNNNNNN (67 aa)) is disordered. A Protein kinase domain is found at 1073-1331 (IKIDKEIGKG…EITNYLTKTF (259 aa)). ATP-binding positions include 1079–1087 (IGKGHFSKV) and lysine 1100. Aspartate 1200 serves as the catalytic Proton acceptor.

The protein belongs to the protein kinase superfamily. TKL Ser/Thr protein kinase family.

It is found in the membrane. The enzyme catalyses L-seryl-[protein] + ATP = O-phospho-L-seryl-[protein] + ADP + H(+). It catalyses the reaction L-threonyl-[protein] + ATP = O-phospho-L-threonyl-[protein] + ADP + H(+). This chain is Probable serine/threonine-protein kinase DDB_G0272254, found in Dictyostelium discoideum (Social amoeba).